Reading from the N-terminus, the 269-residue chain is Indole-3-glycerol phosphate synthase (269 aa).

It belongs to the TrpC family.

It carries out the reaction 1-(2-carboxyphenylamino)-1-deoxy-D-ribulose 5-phosphate + H(+) = (1S,2R)-1-C-(indol-3-yl)glycerol 3-phosphate + CO2 + H2O. It functions in the pathway amino-acid biosynthesis; L-tryptophan biosynthesis; L-tryptophan from chorismate: step 4/5. The polypeptide is Indole-3-glycerol phosphate synthase (Roseiflexus sp. (strain RS-1)).